Consider the following 267-residue polypeptide: 4-hydroxy-tetrahydrodipicolinate reductase (267 aa).

Residues 8 to 13 and aspartate 34 contribute to the NAD(+) site; that span reads GAAGRM. Residue arginine 35 participates in NADP(+) binding. Residues 98 to 100 and 122 to 125 each bind NAD(+); these read GTT and AANF. Residue histidine 155 is the Proton donor/acceptor of the active site. Histidine 156 contacts (S)-2,3,4,5-tetrahydrodipicolinate. Lysine 159 acts as the Proton donor in catalysis. Residue 165–166 coordinates (S)-2,3,4,5-tetrahydrodipicolinate; it reads GT.

This sequence belongs to the DapB family.

The protein resides in the cytoplasm. It carries out the reaction (S)-2,3,4,5-tetrahydrodipicolinate + NAD(+) + H2O = (2S,4S)-4-hydroxy-2,3,4,5-tetrahydrodipicolinate + NADH + H(+). It catalyses the reaction (S)-2,3,4,5-tetrahydrodipicolinate + NADP(+) + H2O = (2S,4S)-4-hydroxy-2,3,4,5-tetrahydrodipicolinate + NADPH + H(+). It functions in the pathway amino-acid biosynthesis; L-lysine biosynthesis via DAP pathway; (S)-tetrahydrodipicolinate from L-aspartate: step 4/4. In terms of biological role, catalyzes the conversion of 4-hydroxy-tetrahydrodipicolinate (HTPA) to tetrahydrodipicolinate. The chain is 4-hydroxy-tetrahydrodipicolinate reductase from Pseudomonas amygdali pv. tabaci (Pseudomonas syringae pv. tabaci).